The primary structure comprises 348 residues: Glucan endo-1,3-beta-glucosidase, basic isoform (348 aa).

At Gln1 the chain carries Pyrrolidone carboxylic acid. The Proton donor role is filled by Glu95. The active-site Nucleophile is the Glu240. Positions 317 to 348 are cleaved as a propeptide — removed in mature form; the sequence is AQRMQRLLLMSSMQHIPLRVTCKLEPSSQSLL.

The protein belongs to the glycosyl hydrolase 17 family.

The protein resides in the vacuole. The catalysed reaction is Hydrolysis of (1-&gt;3)-beta-D-glucosidic linkages in (1-&gt;3)-beta-D-glucans.. Implicated in the defense of plants against pathogens. This Phaseolus vulgaris (Kidney bean) protein is Glucan endo-1,3-beta-glucosidase, basic isoform.